Here is a 225-residue protein sequence, read N- to C-terminus: MGIRAIVVDTAGTTTDLNFIKDTLFTYSAKALPDFLKENETNVLVDNCICDVRDIALEPDASLERVVEILQQWVEEDRKATPLKTLQGLIWKQGYARGEFTGHIFPDFIDTIESIKQQNIRIYSFSSGSAEAQKLLFSHSDGGDLTPHFDGHFDTRTGNKLFKQAYCNIINTISLAPKQVLFISDVIEELKAAEEAGMRTLQMVRSADQRTGNFKQIASFKELTF.

The protein belongs to the HAD-like hydrolase superfamily. MasA/MtnC family. Monomer. Mg(2+) is required as a cofactor.

The enzyme catalyses 5-methylsulfanyl-2,3-dioxopentyl phosphate + H2O = 1,2-dihydroxy-5-(methylsulfanyl)pent-1-en-3-one + phosphate. The protein operates within amino-acid biosynthesis; L-methionine biosynthesis via salvage pathway; L-methionine from S-methyl-5-thio-alpha-D-ribose 1-phosphate: step 3/6. Its pathway is amino-acid biosynthesis; L-methionine biosynthesis via salvage pathway; L-methionine from S-methyl-5-thio-alpha-D-ribose 1-phosphate: step 4/6. Functionally, bifunctional enzyme that catalyzes the enolization of 2,3-diketo-5-methylthiopentyl-1-phosphate (DK-MTP-1-P) into the intermediate 2-hydroxy-3-keto-5-methylthiopentenyl-1-phosphate (HK-MTPenyl-1-P), which is then dephosphorylated to form the acireductone 1,2-dihydroxy-3-keto-5-methylthiopentene (DHK-MTPene). This chain is Enolase-phosphatase E1, found in Shewanella woodyi (strain ATCC 51908 / MS32).